Here is a 217-residue protein sequence, read N- to C-terminus: Nitrile hydratase subunit beta (217 aa).

The protein belongs to the nitrile hydratase subunit beta family. As to quaternary structure, heterodimer of an alpha and a beta chain.

The enzyme catalyses an aliphatic primary amide = an aliphatic nitrile + H2O. Its function is as follows. NHase catalyzes the hydration of various nitrile compounds to the corresponding amides. The sequence is that of Nitrile hydratase subunit beta (nthB) from Pseudomonas putida (Arthrobacter siderocapsulatus).